We begin with the raw amino-acid sequence, 310 residues long: Olfactory receptor 5P1 (310 aa).

The Extracellular segment spans residues 1-25; sequence MEPGNHTAVTKFILLGLTDDPTLCV. N-linked (GlcNAc...) asparagine glycosylation occurs at asparagine 5. Residues 26–46 traverse the membrane as a helical segment; that stretch reads IFFVFFLGIYIVTLVGNISII. At 47–54 the chain is on the cytoplasmic side; that stretch reads NLVRSCPQ. The helical transmembrane segment at 55 to 75 threads the bilayer; that stretch reads LQTPMYMFLSHLAFVDIGYST. Residues 76-99 are Extracellular-facing; the sequence is SVTPIMLIGFIVHETGLPVHACEA. Cysteine 97 and cysteine 189 form a disulfide bridge. Residues 100-120 form a helical membrane-spanning segment; sequence QLCSVVTFGTAECFLLAAMAY. The Cytoplasmic portion of the chain corresponds to 121–133; sequence DRYVAICSPLLYS. Residues 134–154 form a helical membrane-spanning segment; it reads THMSSQICLLLVGASYVGGCV. The Extracellular segment spans residues 155-196; it reads NAWTFTGCLLSLSFCGPNKIDHFFCDFSPLLKLSCSDVSIIG. Residues 197–217 form a helical membrane-spanning segment; it reads IIPSISAGSIIVVTVFVISVS. The Cytoplasmic segment spans residues 218-237; sequence YIYILITILKMRSTEGRHKA. Residues 238–258 form a helical membrane-spanning segment; that stretch reads FSTCTSHLTAVTLYYGTITFI. Over 259 to 271 the chain is Extracellular; the sequence is YVMPKSSYSTKQN. Residues 272 to 292 form a helical membrane-spanning segment; it reads RVVSLFYTVVIPMLNPLIYSL. The Cytoplasmic portion of the chain corresponds to 293 to 310; that stretch reads RNRDVKEALRKATLRIYS.

This sequence belongs to the G-protein coupled receptor 1 family.

Its subcellular location is the cell membrane. Functionally, potential odorant receptor. The sequence is that of Olfactory receptor 5P1 from Mus musculus (Mouse).